The following is a 331-amino-acid chain: (+)-aristolochene synthase TS1 (331 aa).

The tract at residues 1-22 (MTRMKNSSSNVTSASGSGSGSG) is disordered. A compositionally biased stretch (low complexity) spans 7-16 (SSSNVTSASG). Asp102, Asn231, Ser235, and Glu239 together coordinate Mg(2+). A DDxx(x)D/E motif motif is present at residues 102–106 (DDLLE). The NDxxSxxxD/E motif signature appears at 231 to 239 (NDVYSYEKE). Residues Arg326 and Tyr327 each coordinate (2E,6E)-farnesyl diphosphate.

It belongs to the terpene synthase family. Homodimer. The cofactor is Mg(2+).

The catalysed reaction is (2E,6E)-farnesyl diphosphate = (+)-aristolochene + diphosphate. It functions in the pathway sesquiterpene biosynthesis; aristolochene biosynthesis; aristolochene from farnesyl diphosphate: step 1/1. Catalyzes the cyclization of trans,trans-farnesyl diphosphate (FPP) to the bicyclic sesquiterpene aristolochene. Aristolochene is the likely parent compound for a number of sesquiterpenoid toxins produced by filamentous fungi. The protein is (+)-aristolochene synthase TS1 of Penicillium expansum (Blue mold rot fungus).